A 134-amino-acid chain; its full sequence is Thionin-2.2 (134 aa).

Residues 1–24 form the signal peptide; the sequence is MEGKTVISSLLIMSLVLAQIQVEA. 3 cysteine pairs are disulfide-bonded: Cys27/Cys64, Cys28/Cys56, and Cys40/Cys50. Residues 71–134 constitute a propeptide, acidic domain; it reads DILENSGDAV…GGSTAAVKSA (64 aa).

The protein belongs to the plant thionin (TC 1.C.44) family. As to expression, low basal expression in seedlings. Also detected in rosette leaves.

It is found in the secreted. Its function is as follows. Thionins are small plant proteins which are toxic to animal cells. They seem to exert their toxic effect at the level of the cell membrane. Their precise function is not known. In Arabidopsis thaliana (Mouse-ear cress), this protein is Thionin-2.2 (THI2.2).